Here is a 390-residue protein sequence, read N- to C-terminus: Large ribosomal subunit protein uL3y (390 aa).

Residues 1-36 (MSHRKFEHPRHGSLGFLPRKRASRHRGKVKAFPKDD) are disordered. The segment covering 18–31 (PRKRASRHRGKVKA) has biased composition (basic residues).

Belongs to the universal ribosomal protein uL3 family.

The protein localises to the cytoplasm. This Arabidopsis thaliana (Mouse-ear cress) protein is Large ribosomal subunit protein uL3y (ARP2).